Here is a 157-residue protein sequence, read N- to C-terminus: MPRRREVPKREILPDPKFGNVELSKFMNVIMEGGKKAIAERIIYGALEQIEKKNPGKDPVEAFTMAINNVKPMVEVKSRRVGGSNYQVPVEVRPVRRLALSMRWIKEAARKRGEKSMALRLANELMEATEGRGGAMKKRDEVHRMAEANKAFSHFRF.

The protein belongs to the universal ribosomal protein uS7 family. Part of the 30S ribosomal subunit. Contacts proteins S9 and S11.

Functionally, one of the primary rRNA binding proteins, it binds directly to 16S rRNA where it nucleates assembly of the head domain of the 30S subunit. Is located at the subunit interface close to the decoding center, probably blocks exit of the E-site tRNA. This Albidiferax ferrireducens (strain ATCC BAA-621 / DSM 15236 / T118) (Rhodoferax ferrireducens) protein is Small ribosomal subunit protein uS7.